Reading from the N-terminus, the 278-residue chain is Cysteine-rich repeat secretory protein 18 (278 aa).

Positions 1-32 (MYSSSSVSKRFVLVPIVVVVTTQLLLVRNVSS) are cleaved as a signal peptide. 2 consecutive Gnk2-homologous domains span residues 39–147 (YLHH…SLDT) and 160–267 (PSAK…LYPF).

The protein belongs to the cysteine-rich repeat secretory protein family.

It is found in the secreted. This is Cysteine-rich repeat secretory protein 18 (CRRSP18) from Arabidopsis thaliana (Mouse-ear cress).